The chain runs to 134 residues: RxLR effector protein 4 (134 aa).

Positions 1–22 (MRSLFYIAVAVAVFARSSAVAA) are cleaved as a signal peptide. Positions 43 to 65 (AMASSDSRKRFLRATDPEDGDLQ) are disordered. Residues 48–58 (DSRKRFLRATD) are compositionally biased toward basic and acidic residues. Positions 52 to 71 (RFLRATDPEDGDLQADDEER) match the RxLR-dEER motif.

Belongs to the RxLR effector family.

The protein resides in the secreted. Its function is as follows. Effector that enhances plant susceptibility to P.parasitica in Nicotiana benthamiana and Arabidopsis thaliana. Triggers non-specific cell death in a variety of plants, including tobacco, tomato, potato and A.thaliana. E4-induced cell death is dependent on HSP90, NPK and SGT1, suggesting that PpE4 is recognized by the plant immune system. The polypeptide is RxLR effector protein 4 (Phytophthora nicotianae (strain INRA-310) (Phytophthora parasitica)).